The following is a 519-amino-acid chain: Cytochrome P450 72C1 (519 aa).

A helical membrane pass occupies residues 10–30; the sequence is VFLIGFLILILNWVWRAVNWV. Cysteine 467 provides a ligand contact to heme.

This sequence belongs to the cytochrome P450 family. It depends on heme as a cofactor. In terms of tissue distribution, expressed in hypocotyls, roots, cotyledons, stamens and silique junctions.

The protein resides in the membrane. Atypical cytochrome P450 involved in brassinosteroids (BRs) inactivation and regulation of BRs homeostasis. Does not possess carbon 26 hydroxylase activity and may inactivate BRs by hydroxylation of carbons other than C-26. Acts in association with CYP734A1 to inactivate BRs and modulate photomorphogenesis. The sequence is that of Cytochrome P450 72C1 (CYP72C1) from Arabidopsis thaliana (Mouse-ear cress).